Consider the following 243-residue polypeptide: Protein DMP8 (243 aa).

Residues 1–37 (MEKTEESVGIRVYTTTTTQNPSPTSSRSPKPVPLSSL) are disordered. Residues 14–29 (TTTTTQNPSPTSSRSP) show a composition bias toward low complexity. 4 helical membrane passes run 70 to 90 (MLVN…LPTI), 98 to 118 (GINT…CFFF), 174 to 194 (VNDF…AFSD), and 212 to 232 (VMES…LVFP).

The protein belongs to the plant DMP1 protein family. As to expression, restricted to flowers.

It is found in the endoplasmic reticulum membrane. It localises to the vacuole membrane. In terms of biological role, involved in membrane remodeling. This is Protein DMP8 from Arabidopsis thaliana (Mouse-ear cress).